We begin with the raw amino-acid sequence, 961 residues long: Alanine--tRNA ligase, chloroplastic/mitochondrial (961 aa).

Zn(2+)-binding residues include His-641, His-645, Cys-743, and His-747.

Belongs to the class-II aminoacyl-tRNA synthetase family. As to quaternary structure, monomer. Zn(2+) is required as a cofactor.

Its subcellular location is the plastid. The protein localises to the chloroplast. It is found in the mitochondrion. The enzyme catalyses tRNA(Ala) + L-alanine + ATP = L-alanyl-tRNA(Ala) + AMP + diphosphate. Functionally, catalyzes the attachment of alanine to tRNA(Ala) in a two-step reaction: alanine is first activated by ATP to form Ala-AMP and then transferred to the acceptor end of tRNA(Ala). Also edits incorrectly charged tRNA(Ala) via its editing domain. The protein is Alanine--tRNA ligase, chloroplastic/mitochondrial of Sorghum bicolor (Sorghum).